A 467-amino-acid chain; its full sequence is Asparagine--tRNA ligase (467 aa).

The protein belongs to the class-II aminoacyl-tRNA synthetase family. As to quaternary structure, homodimer.

Its subcellular location is the cytoplasm. It carries out the reaction tRNA(Asn) + L-asparagine + ATP = L-asparaginyl-tRNA(Asn) + AMP + diphosphate + H(+). The protein is Asparagine--tRNA ligase of Haemophilus ducreyi (strain 35000HP / ATCC 700724).